A 49-amino-acid chain; its full sequence is Agglutinin-1 (49 aa).

Homooligomer. Glycosylated.

Its function is as follows. Beta-galactoside specific lectin. Has a hemagglutinating activity on erythrocytes. The sequence is that of Agglutinin-1 from Pomacea flagellata (Apple snail).